The following is a 418-amino-acid chain: CinA-like protein (418 aa).

This sequence belongs to the CinA family.

This Leptospira interrogans serogroup Icterohaemorrhagiae serovar Lai (strain 56601) protein is CinA-like protein.